We begin with the raw amino-acid sequence, 133 residues long: Large-conductance mechanosensitive channel (133 aa).

2 helical membrane passes run 14–34 (VVDL…VTTL) and 73–93 (FITV…MVVV).

The protein belongs to the MscL family. As to quaternary structure, homopentamer.

Its subcellular location is the cell membrane. Functionally, channel that opens in response to stretch forces in the membrane lipid bilayer. May participate in the regulation of osmotic pressure changes within the cell. The protein is Large-conductance mechanosensitive channel of Renibacterium salmoninarum (strain ATCC 33209 / DSM 20767 / JCM 11484 / NBRC 15589 / NCIMB 2235).